Consider the following 39-residue polypeptide: Potassium channel toxin alpha-KTx 2.17 (39 aa).

3 disulfide bridges follow: Cys-7/Cys-29, Cys-13/Cys-34, and Cys-17/Cys-36. An Isoleucine amide modification is found at Ile-39.

The protein belongs to the short scorpion toxin superfamily. Potassium channel inhibitor family. Alpha-KTx 02 subfamily. As to expression, expressed by the venom gland.

Its subcellular location is the secreted. Blocks human voltage-gated potassium channels Kv1.1/KCNA1 (IC(50)=4.8 nM) and Kv1.2/KCNA2 (IC(50)=2.9 nM). This chain is Potassium channel toxin alpha-KTx 2.17, found in Centruroides tecomanus (Scorpion).